Consider the following 130-residue polypeptide: Blasticidin-S deaminase (130 aa).

One can recognise a CMP/dCMP-type deaminase domain in the interval 1–129 (MPLSQEESTL…ELLPSGYVWE (129 aa)). Substrate is bound at residue S28. C54 contributes to the Zn(2+) binding site. E56 serves as the catalytic Proton donor. R82 is a binding site for substrate. 2 residues coordinate Zn(2+): C88 and C91. The substrate site is built by Y126 and W128.

The protein belongs to the cytidine and deoxycytidylate deaminase family. Homotetramer. Zn(2+) serves as cofactor.

It carries out the reaction blasticidin S + H2O + H(+) = deaminohydroxyblasticidin S + NH4(+). Functionally, catalyzes the deamination of the cytosine moiety of the antibiotics blasticidin S, cytomycin and acetylblasticidin S. The sequence is that of Blasticidin-S deaminase (bsd) from Aspergillus terreus.